We begin with the raw amino-acid sequence, 628 residues long: Chaperone protein HtpG (628 aa).

Residues 1 to 334 are a; substrate-binding; the sequence is MTTIDTASET…SEDLPLNLSR (334 aa). Positions 335-550 are b; that stretch reads EMLQNNPQLA…GFGPDRELEK (216 aa). The segment at 551 to 628 is c; that stretch reads MLARANKGAA…LVLRGVVAHG (78 aa).

It belongs to the heat shock protein 90 family. As to quaternary structure, homodimer.

The protein localises to the cytoplasm. Functionally, molecular chaperone. Has ATPase activity. The sequence is that of Chaperone protein HtpG from Rhodopseudomonas palustris (strain HaA2).